We begin with the raw amino-acid sequence, 325 residues long: Phage-like element PBSX protein XkdQ (325 aa).

To B.subtilis YqbQ.

The chain is Phage-like element PBSX protein XkdQ (xkdQ) from Bacillus subtilis (strain 168).